The sequence spans 328 residues: Methionyl-tRNA formyltransferase (328 aa).

110-113 (SLLP) lines the (6S)-5,6,7,8-tetrahydrofolate pocket.

It belongs to the Fmt family.

It catalyses the reaction L-methionyl-tRNA(fMet) + (6R)-10-formyltetrahydrofolate = N-formyl-L-methionyl-tRNA(fMet) + (6S)-5,6,7,8-tetrahydrofolate + H(+). Its function is as follows. Attaches a formyl group to the free amino group of methionyl-tRNA(fMet). The formyl group appears to play a dual role in the initiator identity of N-formylmethionyl-tRNA by promoting its recognition by IF2 and preventing the misappropriation of this tRNA by the elongation apparatus. The chain is Methionyl-tRNA formyltransferase from Prochlorococcus marinus (strain MIT 9515).